The primary structure comprises 435 residues: Ribosomal protein uS12 methylthiotransferase RimO (435 aa).

Residues 2 to 118 form the MTTase N-terminal domain; sequence KKFHIVKLGC…IVEKIENGEY (117 aa). [4Fe-4S] cluster contacts are provided by Cys11, Cys47, Cys81, Cys150, Cys154, and Cys157. The Radical SAM core domain occupies 136 to 364; the sequence is IPDSHYAYVK…MTVQSEISKN (229 aa). A TRAM domain is found at 367-435; sequence EKYIGETLEV…EYDLEGEIVE (69 aa).

Belongs to the methylthiotransferase family. RimO subfamily. It depends on [4Fe-4S] cluster as a cofactor.

The protein resides in the cytoplasm. It carries out the reaction L-aspartate(89)-[ribosomal protein uS12]-hydrogen + (sulfur carrier)-SH + AH2 + 2 S-adenosyl-L-methionine = 3-methylsulfanyl-L-aspartate(89)-[ribosomal protein uS12]-hydrogen + (sulfur carrier)-H + 5'-deoxyadenosine + L-methionine + A + S-adenosyl-L-homocysteine + 2 H(+). Its function is as follows. Catalyzes the methylthiolation of an aspartic acid residue of ribosomal protein uS12. This is Ribosomal protein uS12 methylthiotransferase RimO from Petrotoga mobilis (strain DSM 10674 / SJ95).